The sequence spans 313 residues: Porphobilinogen deaminase (313 aa).

At C242 the chain carries S-(dipyrrolylmethanemethyl)cysteine.

The protein belongs to the HMBS family. As to quaternary structure, monomer. It depends on dipyrromethane as a cofactor.

The catalysed reaction is 4 porphobilinogen + H2O = hydroxymethylbilane + 4 NH4(+). It functions in the pathway porphyrin-containing compound metabolism; protoporphyrin-IX biosynthesis; coproporphyrinogen-III from 5-aminolevulinate: step 2/4. Functionally, tetrapolymerization of the monopyrrole PBG into the hydroxymethylbilane pre-uroporphyrinogen in several discrete steps. This is Porphobilinogen deaminase from Escherichia fergusonii (strain ATCC 35469 / DSM 13698 / CCUG 18766 / IAM 14443 / JCM 21226 / LMG 7866 / NBRC 102419 / NCTC 12128 / CDC 0568-73).